Consider the following 631-residue polypeptide: MBT domain-containing protein 1 (631 aa).

The tract at residues 1 to 31 (MFDGYDSCSEDTSSSSSSEESEEEVAPLPSN) is disordered. The segment at 45–80 (PDGKSGMATCEMCGMVGVRDAFYSKTKRFCSVSCSR) adopts an FCS-type zinc-finger fold. Zn(2+) is bound by residues Cys54, Cys57, Cys74, and Cys78. Lys115 is subject to N6-acetyllysine. MBT repeat units follow at residues 144–248 (FSWG…LVPP), 256–353 (TNWK…IGHR), 354–459 (FKRS…LTPP), and 467–563 (FKWF…LQPP). The disordered stretch occupies residues 563–631 (PASQSSRESQ…SATVYIKQEP (69 aa)). Positions 564-576 (ASQSSRESQSASS) are enriched in low complexity. Residues 577 to 593 (KQKKKAKSQQYKGHKKM) are compositionally biased toward basic residues.

As to quaternary structure, monomer. Component of the NuA4 histone acetyltransferase complex. Interacts with EPC1; interaction is direct and promotes recruitment of MBTD1 into the NuA4 histone acetyltransferase complex.

It is found in the nucleus. The protein resides in the chromosome. Its function is as follows. Chromatin reader component of the NuA4 histone acetyltransferase complex, a multiprotein complex involved in transcriptional activation of select genes principally by acetylation of nucleosomal histones H4 and H2A. The NuA4 complex plays a direct role in repair of DNA double-strand breaks (DSBs) by promoting homologous recombination (HR). MBTD1 specifically recognizes and binds monomethylated and dimethylated 'Lys-20' on histone H4 (H4K20me1 and H4K20me2, respectively). In the NuA4 complex, MBTD1 promotes recruitment of the complex to H4K20me marks by competing with TP53BP1 for binding to H4K20me. Following recruitment to H4K20me at DNA breaks, the NuA4 complex catalyzes acetylation of 'Lys-15' on histone H2A (H2AK15), blocking the ubiquitination mark required for TP53BP1 localization at DNA breaks, thereby promoting homologous recombination (HR). The polypeptide is MBT domain-containing protein 1 (Mus musculus (Mouse)).